The sequence spans 235 residues: Motile sperm domain-containing protein 3 (235 aa).

Disordered regions lie at residues 1 to 25 (MRRG…RGAP) and 143 to 171 (ELQG…FQEH). The 113-residue stretch at 33-145 (PVLVFPPDLV…RAPAYPLELQ (113 aa)) folds into the MSP domain. Residues 149–164 (DPAPRPGPPAGTPPPT) are compositionally biased toward pro residues. Helical transmembrane passes span 180-200 (SFLL…LPLP) and 213-233 (VSLG…MVFL).

The protein localises to the membrane. The sequence is that of Motile sperm domain-containing protein 3 (MOSPD3) from Homo sapiens (Human).